Here is a 100-residue protein sequence, read N- to C-terminus: Small ribosomal subunit protein uS14c (100 aa).

The protein belongs to the universal ribosomal protein uS14 family. In terms of assembly, part of the 30S ribosomal subunit.

The protein resides in the plastid. The protein localises to the cyanelle. Binds 16S rRNA, required for the assembly of 30S particles. This is Small ribosomal subunit protein uS14c from Cyanophora paradoxa.